The following is a 166-amino-acid chain: Protein TIFY 11e (166 aa).

One can recognise a Tify domain in the interval 65–100 (ASSAAAQMTIFYGGRVLVLDECPADRAAALLRLAAS). A Jas motif is present at residues 123 to 148 (PVARKASLQRFMEKRKGRLAARGQPY). The short motif at 125-132 (ARKASLQR) is the Nuclear localization signal element.

This sequence belongs to the TIFY/JAZ family. Post-translationally, ubiquitinated. Targeted for degradation by the SCF(COI1) E3 ubiquitin ligase-proteasome pathway during jasmonate signaling.

The protein resides in the nucleus. In terms of biological role, repressor of jasmonate responses. This chain is Protein TIFY 11e, found in Oryza sativa subsp. japonica (Rice).